We begin with the raw amino-acid sequence, 673 residues long: MRLNPGQQQAVEFVTGPCLVLAGAGSGKTRVITNKIAHLIRGCGYQARHIAAVTFTNKAAREMKERVGQTLGRKEARGLMISTFHTLGLDIIKREYAALGMKANFSLFDDTDQLALLKELTEGLIEDDKVLLQQLISTISNWKNDLKTPSQAAASAIGERDRIFAHCYGLYDAHLKACNVLDFDDLILLPTLLLQRNEEVRKRWQNKIRYLLVDEYQDTNTSQYELVKLLVGSRARFTVVGDDDQSIYSWRGARPQNLVLLSQDFPALKVIKLEQNYRSSGRILKAANILIANNPHVFEKRLFSELGYGAELKVLSANNEEHEAERVTGELIAHHFVNKTQYKDYAILYRGNHQSRVFEKFLMQNRIPYKISGGTSFFSRPEIKDLLAYLRVLTNPDDDSAFLRIVNTPKREIGPATLKKLGEWAMTRNKSMFTASFDMGLSQTLSGRGYEALTRFTHWLAEIQRLAEREPIAAVRDLIHGMDYESWLYETSPSPKAAEMRMKNVNQLFSWMTEMLEGSELDEPMTLTQVVTRFTLRDMMERGESEEELDQVQLMTLHASKGLEFPYVYMVGMEEGFLPHQSSIDEDNIDEERRLAYVGITRAQKELTFTLCKERRQYGELVRPEPSRFLLELPQDDLIWEQERKVVSAEERMQKGQSHLANLKAMMAAKRGK.

One can recognise a UvrD-like helicase ATP-binding domain in the interval 1–280; that stretch reads MRLNPGQQQA…IKLEQNYRSS (280 aa). Residues 22–29 and arginine 278 each bind ATP; that span reads AGAGSGKT. Positions 281–562 constitute a UvrD-like helicase C-terminal domain; the sequence is GRILKAANIL…QLMTLHASKG (282 aa).

Belongs to the helicase family. UvrD subfamily. In terms of assembly, homodimer in association with DNA.

The catalysed reaction is Couples ATP hydrolysis with the unwinding of duplex DNA by translocating in the 3'-5' direction.. The enzyme catalyses ATP + H2O = ADP + phosphate + H(+). With respect to regulation, binding to DNA induces dimerization, which is required for DNA helicase activity. Helicase activity is stimulated by PriC. Its function is as follows. Rep helicase is a single-stranded (ss)DNA-dependent ATPase involved in DNA replication; it can initiate unwinding at a nick in the DNA. It binds to ssDNA and acts in a progressive fashion along the DNA in the 3' to 5' direction. Binds double-stranded (ds)DNA with a 5' ss- but not 3' ss-extension and forked structures with either lagging or leading ssDNA. Part of the PriC-Rep pathway for restart of stalled replication forks, which reloads the DnaB replicative helicase on sites other than the origin of replication. The sequence is that of ATP-dependent DNA helicase Rep from Escherichia coli (strain K12).